Here is a 315-residue protein sequence, read N- to C-terminus: Ribosomal RNA small subunit methyltransferase H (315 aa).

Residues 35–37 (AGH), aspartate 55, phenylalanine 84, aspartate 105, and glutamine 112 each bind S-adenosyl-L-methionine.

It belongs to the methyltransferase superfamily. RsmH family.

It is found in the cytoplasm. It catalyses the reaction cytidine(1402) in 16S rRNA + S-adenosyl-L-methionine = N(4)-methylcytidine(1402) in 16S rRNA + S-adenosyl-L-homocysteine + H(+). In terms of biological role, specifically methylates the N4 position of cytidine in position 1402 (C1402) of 16S rRNA. In Streptococcus agalactiae serotype III (strain NEM316), this protein is Ribosomal RNA small subunit methyltransferase H.